A 341-amino-acid polypeptide reads, in one-letter code: tRNA N6-adenosine threonylcarbamoyltransferase (341 aa).

Residues His-119 and His-123 each contribute to the Fe cation site. Substrate is bound by residues Met-141 to Gly-145, Asp-174, Gly-187, and Asn-279. Residue Asp-307 participates in Fe cation binding.

It belongs to the KAE1 / TsaD family. Fe(2+) serves as cofactor.

It is found in the cytoplasm. It carries out the reaction L-threonylcarbamoyladenylate + adenosine(37) in tRNA = N(6)-L-threonylcarbamoyladenosine(37) in tRNA + AMP + H(+). Required for the formation of a threonylcarbamoyl group on adenosine at position 37 (t(6)A37) in tRNAs that read codons beginning with adenine. Is involved in the transfer of the threonylcarbamoyl moiety of threonylcarbamoyl-AMP (TC-AMP) to the N6 group of A37, together with TsaE and TsaB. TsaD likely plays a direct catalytic role in this reaction. This Oenococcus oeni (strain ATCC BAA-331 / PSU-1) protein is tRNA N6-adenosine threonylcarbamoyltransferase.